The following is a 233-amino-acid chain: UPF0502 protein YpsIP31758_2048 (233 aa).

This sequence belongs to the UPF0502 family.

This Yersinia pseudotuberculosis serotype O:1b (strain IP 31758) protein is UPF0502 protein YpsIP31758_2048.